The following is a 294-amino-acid chain: Ferredoxin--NADP reductase (294 aa).

The region spanning 13 to 137 (KNPYIGKCLS…TGPVGKEMLL (125 aa)) is the FAD-binding FR-type domain. FAD is bound by residues 72 to 75 (RLYS), 93 to 95 (CVR), Tyr99, 111 to 113 (VCS), and Thr152. The NADP(+) site is built by Ser75 and Arg95. NADP(+) contacts are provided by residues Thr152, 184 to 185 (IP), 214 to 215 (SR), Lys224, 224 to 228 (KMYIQ), 253 to 254 (GL), and Glu292.

Belongs to the ferredoxin--NADP reductase type 1 family. Requires FAD as cofactor.

The protein resides in the cellular thylakoid membrane. The catalysed reaction is 2 reduced [2Fe-2S]-[ferredoxin] + NADP(+) + H(+) = 2 oxidized [2Fe-2S]-[ferredoxin] + NADPH. The chain is Ferredoxin--NADP reductase (petH) from Spirulina sp.